Reading from the N-terminus, the 190-residue chain is Probable DNA replication complex GINS protein PSF2 (190 aa).

It belongs to the GINS2/PSF2 family. In terms of assembly, component of the GINS complex which is a heterotetramer of gins1, gins2, gins3 and gins4.

It is found in the nucleus. Functionally, the GINS complex plays an essential role in the initiation of DNA replication. In Brugia malayi (Filarial nematode worm), this protein is Probable DNA replication complex GINS protein PSF2.